We begin with the raw amino-acid sequence, 120 residues long: Small ribosomal subunit protein uS13 (120 aa).

Positions 96 to 120 are disordered; sequence PCRGQRTRTNARTRKGPRKAIAGKK.

Belongs to the universal ribosomal protein uS13 family. As to quaternary structure, part of the 30S ribosomal subunit. Forms a loose heterodimer with protein S19. Forms two bridges to the 50S subunit in the 70S ribosome.

In terms of biological role, located at the top of the head of the 30S subunit, it contacts several helices of the 16S rRNA. In the 70S ribosome it contacts the 23S rRNA (bridge B1a) and protein L5 of the 50S subunit (bridge B1b), connecting the 2 subunits; these bridges are implicated in subunit movement. Contacts the tRNAs in the A and P-sites. The sequence is that of Small ribosomal subunit protein uS13 from Dechloromonas aromatica (strain RCB).